We begin with the raw amino-acid sequence, 100 residues long: Large ribosomal subunit protein bL28 (100 aa).

The interval 1–25 (MTRRCDITGKSVLSGNNVSHANNKS) is disordered. A compositionally biased stretch (polar residues) spans 11 to 22 (SVLSGNNVSHAN).

Belongs to the bacterial ribosomal protein bL28 family.

This is Large ribosomal subunit protein bL28 from Acidiphilium cryptum (strain JF-5).